The chain runs to 73 residues: Myosin-IB light chain (73 aa).

2 consecutive EF-hand domains span residues 3-38 and 38-73; these read DEKTQLIEAFYNFDGDYDGFVSVEEFRGIIRDGLPM and MTEAEITEFFEAADPNNTGFIDYKAFAAMLYSVDES. The Ca(2+) site is built by Asp16, Asp18, Asp20, and Glu27.

Myosin I is a dimer of a heavy and a light chain. Inability to self-assemble into filaments. Interacts with myoB. Does not interact with myoC or myoD.

Functionally, functions as the light chain for myosin-B. Binds calcium with submicromolar affinity and may sense physiological calcium changes. This chain is Myosin-IB light chain (mlcB), found in Dictyostelium discoideum (Social amoeba).